A 1171-amino-acid chain; its full sequence is ATP-dependent helicase/deoxyribonuclease subunit B (1171 aa).

A UvrD-like helicase ATP-binding domain is found at 1–343 (MSLRFVIGRA…LVADENYRYR (343 aa)). ATP is bound at residue 8–15 (GRAGSGKS). Residues 281-587 (MEQPRFHSPA…QFANIPPSLD (307 aa)) form the UvrD-like helicase C-terminal domain. Residues Cys805, Cys1129, Cys1132, and Cys1138 each contribute to the [4Fe-4S] cluster site.

Belongs to the helicase family. AddB/RexB type 1 subfamily. As to quaternary structure, heterodimer of AddA and AddB. Mg(2+) is required as a cofactor. The cofactor is [4Fe-4S] cluster.

In terms of biological role, the heterodimer acts as both an ATP-dependent DNA helicase and an ATP-dependent, dual-direction single-stranded exonuclease. Recognizes the chi site generating a DNA molecule suitable for the initiation of homologous recombination. The AddB subunit has 5' -&gt; 3' nuclease activity but not helicase activity. This is ATP-dependent helicase/deoxyribonuclease subunit B from Bacillus cereus (strain AH187).